A 446-amino-acid polypeptide reads, in one-letter code: C-type lectin domain family 18 member C (446 aa).

Positions Met-1 to Ala-26 are cleaved as a signal peptide. The SCP domain maps to Leu-52–Tyr-182. Asn-144 is a glycosylation site (N-linked (GlcNAc...) asparagine). An EGF-like domain is found at Pro-228 to Gln-261. 4 disulfide bridges follow: Cys-236–Cys-249, Cys-251–Cys-260, Cys-327–Cys-432, and Cys-408–Cys-424. The 128-residue stretch at Ile-306–Gln-433 folds into the C-type lectin domain.

In terms of tissue distribution, detected in peripheral blood cells.

Its subcellular location is the secreted. The protein localises to the endoplasmic reticulum. It localises to the golgi apparatus. The protein resides in the endosome. Binds polysaccharidesin a Ca(2+)-independent manner with a preferentially binding to fucoidan, beta-glucans and galactans. This Homo sapiens (Human) protein is C-type lectin domain family 18 member C (CLEC18C).